Consider the following 294-residue polypeptide: Tetraspanin-15 (294 aa).

The Cytoplasmic segment spans residues 1–23; sequence MPRGDSEQVRYCARFSYLWLKFS. The helical transmembrane segment at 24–44 threads the bilayer; that stretch reads LVIYSTVFWLIGGLVLSVGIY. Topologically, residues 45–62 are extracellular; sequence AEVERQKYKTLESAFLAP. The chain crosses the membrane as a helical span at residues 63-83; the sequence is AIILILLGVVMFIVSFIGVLA. The Cytoplasmic portion of the chain corresponds to 84–93; the sequence is SLRDNLCLLQ. Residues 94-114 traverse the membrane as a helical segment; the sequence is AFMYILGICLIIELIGGVVAL. Over 115 to 235 the chain is Extracellular; sequence IFRNQTIDFL…WFTDNYTIMA (121 aa). Residue Asn118 is glycosylated (N-linked (GlcNAc...) asparagine). 4 cysteine pairs are disulfide-bonded: Cys154/Cys219, Cys155/Cys185, Cys171/Cys179, and Cys186/Cys198. 2 N-linked (GlcNAc...) asparagine glycosylation sites follow: Asn189 and Asn230. The helical transmembrane segment at 236–256 threads the bilayer; that stretch reads GVLLGILLPQFLGVLLTFLYI. The Cytoplasmic segment spans residues 257–294; it reads TRVEDIITEHSVTDGLLGPGTKAGVEAAGTGCCMCYPI.

Belongs to the tetraspanin (TM4SF) family. Interacts with ADAM10; the interaction influences ADAM10 substrate specificity, endocytosis and turnover. In terms of processing, palmitoylated.

It localises to the cell membrane. Its subcellular location is the late endosome membrane. Its function is as follows. Part of TspanC8 subgroup, composed of 6 members that interact with the transmembrane metalloprotease ADAM10. This interaction is required for ADAM10 exit from the endoplasmic reticulum and for enzymatic maturation and trafficking to the cell surface as well as substrate specificity. Different TspanC8/ADAM10 complexes have distinct substrates. Promotes ADAM10-mediated cleavage of CDH2. Negatively regulates ligand-induced Notch activity probably by regulating ADAM10 activity. This is Tetraspanin-15 (TSPAN15) from Bos taurus (Bovine).